The following is a 340-amino-acid chain: Alcohol dehydrogenase (340 aa).

The Zn(2+) site is built by Cys37, His58, Cys89, Cys92, Cys95, Cys103, and Cys145.

The protein belongs to the zinc-containing alcohol dehydrogenase family. The cofactor is Zn(2+).

The enzyme catalyses a primary alcohol + NAD(+) = an aldehyde + NADH + H(+). It carries out the reaction a secondary alcohol + NAD(+) = a ketone + NADH + H(+). In Staphylococcus epidermidis (strain ATCC 35984 / DSM 28319 / BCRC 17069 / CCUG 31568 / BM 3577 / RP62A), this protein is Alcohol dehydrogenase (adh).